A 155-amino-acid chain; its full sequence is Anaerobic ribonucleoside-triphosphate reductase-activating protein (155 aa).

Positions 26, 30, and 33 each coordinate [4Fe-4S] cluster. Residues 32 to 34 and Gly-74 each bind S-adenosyl-L-methionine; that span reads GCY.

This sequence belongs to the organic radical-activating enzymes family. In terms of assembly, forms a tetramer composed of two NrdD and two NrdG subunits. It depends on [4Fe-4S] cluster as a cofactor.

It localises to the cytoplasm. The catalysed reaction is glycyl-[protein] + reduced [flavodoxin] + S-adenosyl-L-methionine = glycin-2-yl radical-[protein] + semiquinone [flavodoxin] + 5'-deoxyadenosine + L-methionine + H(+). Activation of anaerobic ribonucleoside-triphosphate reductase under anaerobic conditions by generation of an organic free radical, using S-adenosylmethionine and reduced flavodoxin as cosubstrates to produce 5'-deoxy-adenosine. The protein is Anaerobic ribonucleoside-triphosphate reductase-activating protein (nrdG) of Vibrio cholerae serotype O1 (strain ATCC 39315 / El Tor Inaba N16961).